A 512-amino-acid chain; its full sequence is Sodium/proline symporter (512 aa).

The next 13 helical transmembrane spans lie at 16-36 (WQTY…GFYG), 54-74 (IGPY…WMIM), 85-105 (LSAM…YFVV), 139-159 (IISG…GFVS), 174-194 (FGLI…GYLA), 200-220 (FFQG…AMMN), 240-260 (LFKG…LGYF), 286-306 (ISWM…GIAF), 327-347 (VLFH…AIMS), 381-401 (FVMI…AIAW), 410-430 (LVGN…LFAL), 438-458 (AGAV…IAWI), and 467-487 (IFGL…TYVV).

It belongs to the sodium:solute symporter (SSF) (TC 2.A.21) family.

It is found in the cell membrane. It catalyses the reaction L-proline(in) + Na(+)(in) = L-proline(out) + Na(+)(out). Functionally, catalyzes the sodium-dependent uptake of extracellular L-proline. Since most S.aureus strains are L-proline auxotrophs, this transporter may aid the bacterial persistence during an infection of tissues with low proline concentrations. The chain is Sodium/proline symporter (putP) from Staphylococcus aureus (strain Newman).